Reading from the N-terminus, the 61-residue chain is Small ribosomal subunit protein uS14 (61 aa).

4 residues coordinate Zn(2+): cysteine 24, cysteine 27, cysteine 40, and cysteine 43.

This sequence belongs to the universal ribosomal protein uS14 family. Zinc-binding uS14 subfamily. In terms of assembly, part of the 30S ribosomal subunit. Contacts proteins S3 and S10. Requires Zn(2+) as cofactor.

In terms of biological role, binds 16S rRNA, required for the assembly of 30S particles and may also be responsible for determining the conformation of the 16S rRNA at the A site. The chain is Small ribosomal subunit protein uS14 from Campylobacter curvus (strain 525.92).